The following is a 582-amino-acid chain: Proline--tRNA ligase (582 aa).

This sequence belongs to the class-II aminoacyl-tRNA synthetase family. ProS type 1 subfamily. Homodimer.

The protein localises to the cytoplasm. The catalysed reaction is tRNA(Pro) + L-proline + ATP = L-prolyl-tRNA(Pro) + AMP + diphosphate. Functionally, catalyzes the attachment of proline to tRNA(Pro) in a two-step reaction: proline is first activated by ATP to form Pro-AMP and then transferred to the acceptor end of tRNA(Pro). As ProRS can inadvertently accommodate and process non-cognate amino acids such as alanine and cysteine, to avoid such errors it has two additional distinct editing activities against alanine. One activity is designated as 'pretransfer' editing and involves the tRNA(Pro)-independent hydrolysis of activated Ala-AMP. The other activity is designated 'posttransfer' editing and involves deacylation of mischarged Ala-tRNA(Pro). The misacylated Cys-tRNA(Pro) is not edited by ProRS. This is Proline--tRNA ligase from Mycolicibacterium paratuberculosis (strain ATCC BAA-968 / K-10) (Mycobacterium paratuberculosis).